A 316-amino-acid chain; its full sequence is Phosphatidylinositol mannoside acyltransferase (316 aa).

Catalysis depends on H137, which acts as the Proton acceptor. The hexadecanoyl-CoA site is built by H137 and R175. E211 is an active-site residue. E240 is a binding site for hexadecanoyl-CoA.

The protein belongs to the LpxL/LpxM/LpxP family.

The protein localises to the cell inner membrane. The enzyme catalyses a 2,6-O-bis(alpha-D-mannopyranosyl)-1-phosphatidyl-1D-myo-inositol + an acyl-CoA = a 2-O-(alpha-D-mannosyl)-6-O-(6-O-acyl-alpha-D-mannosyl)-1-phosphatidyl-1D-myo-inositol + CoA. The catalysed reaction is a 1,2-diacyl-sn-glycero-3-phospho-[alpha-D-mannopyranosyl-(1&lt;-&gt;6)-D-myo-inositol] + an acyl-CoA = a 1,2-diacyl-sn-glycero-3-phospho-[alpha-D-6-acyl-mannopyranosyl-(1&lt;-&gt;6)-D-myo-inositol] + CoA. It functions in the pathway phospholipid metabolism; phosphatidylinositol metabolism. Functionally, catalyzes the transfer of a palmitoyl moiety from palmitoyl-CoA to the 6-position of the mannose ring linked to the 2-position of myo-inositol in phosphatidyl-myo-inositol monomannoside (PIM1) or dimannoside (PIM2). Essential for growth and survival in axenic cultures and during macrophage infection and in a mouse model of infection. The polypeptide is Phosphatidylinositol mannoside acyltransferase (Mycobacterium tuberculosis (strain ATCC 25618 / H37Rv)).